Reading from the N-terminus, the 477-residue chain is E3 ubiquitin-protein ligase TRIM17 (477 aa).

An RING-type zinc finger spans residues 16–66 (CSICLDYFTDPVMTTCGHNFCRACIQLSWEKARGKKGRRKRKGSFPCPECR). The segment at 94–135 (QKQDLCQEHHEPLKLFCQKDQSPICVVCRESREHRLHRVLPA) adopts a B box-type zinc-finger fold. Zn(2+)-binding residues include Cys-99, His-102, Cys-121, and His-127. Residues 135 to 223 (AEEAVQGYKL…TASRLRESVA (89 aa)) adopt a coiled-coil conformation. The B30.2/SPRY domain maps to 277–475 (PRTVCRVPGQ…MVISTVTMWV (199 aa)).

The protein belongs to the TRIM/RBCC family. Interacts (via coiled coil) with TRIM44 (via coiled coil). Interacts with TRIM28; this interaction prevents TRIM28 activity on BCL2A1. Interacts with TRIM41; this interaction prevents TRIM41 activity on ZSCAN2. Interacts with BECN1. Interacts with NFATC3 and NFATC4; these interactions prevent NFATC3 and NFATC4 nuclear localization. Post-translationally, auto-ubiquitinated. As to expression, almost exclusively in the testis.

The protein localises to the cytoplasm. It localises to the lysosome. The enzyme catalyses S-ubiquitinyl-[E2 ubiquitin-conjugating enzyme]-L-cysteine + [acceptor protein]-L-lysine = [E2 ubiquitin-conjugating enzyme]-L-cysteine + N(6)-ubiquitinyl-[acceptor protein]-L-lysine.. It participates in protein modification; protein ubiquitination. Functionally, E3 ubiquitin ligase that plays important roles in the regulation of neuronal apoptosis, selective autophagy or cell proliferation. Stimulates the degradation of kinetochore ZW10 interacting protein ZWINT in a proteasome-dependent manner, leading to negative regulation of cell proliferation. Inhibits autophagic degradation of diverse known targets while contributing to autophagy of midbodies. Autophagy-inhibitory activity involves MCL1, which TRIM17 assembles into complexes with the key autophagy regulator BECN1. Controls neuronal apoptosis by mediating ubiquitination and degradation of MCL1 to initiate neuronal death. In addition, regulates NFAT transcription factors NFATC3 and NFATC4 activities by preventing their nuclear localization, thus inhibiting their transcriptional activities. Decreases TRIM41-mediated degradation of ZSCAN2 thereby stimulating alpha-synuclein/SNCA transcription in neuronal cells. Prevents the E3 ubiquitin-ligase activity of TRIM28 and its interaction with anti-apoptotic BCL2A1, blocking TRIM28 from ubiquitinating BCL2A1. The protein is E3 ubiquitin-protein ligase TRIM17 (TRIM17) of Homo sapiens (Human).